The sequence spans 131 residues: Profilin-1 (131 aa).

This sequence belongs to the profilin family. As to quaternary structure, occurs in many kinds of cells as a complex with monomeric actin in a 1:1 ratio.

It is found in the cytoplasm. The protein resides in the cytoskeleton. Functionally, binds to actin and affects the structure of the cytoskeleton. At high concentrations, profilin prevents the polymerization of actin, whereas it enhances it at low concentrations. By binding to PIP2, it inhibits the formation of IP3 and DG. The chain is Profilin-1 (PRO1) from Ricinus communis (Castor bean).